Here is a 101-residue protein sequence, read N- to C-terminus: uncharacterized protein (101 aa).

The next 2 helical transmembrane spans lie at 35–55 and 66–86; these read LWTM…LIII and FLFF…TLLF.

It is found in the membrane. This is an uncharacterized protein from Saccharomyces cerevisiae (strain ATCC 204508 / S288c) (Baker's yeast).